We begin with the raw amino-acid sequence, 220 residues long: Small ribosomal subunit protein uS3 (220 aa).

The region spanning 38-106 is the KH type-2 domain; the sequence is IRNFINKKLQ…QVHINIVEIK (69 aa).

It belongs to the universal ribosomal protein uS3 family. As to quaternary structure, part of the 30S ribosomal subunit. Forms a tight complex with proteins S10 and S14.

Functionally, binds the lower part of the 30S subunit head. Binds mRNA in the 70S ribosome, positioning it for translation. This is Small ribosomal subunit protein uS3 from Lacticaseibacillus paracasei (strain ATCC 334 / BCRC 17002 / CCUG 31169 / CIP 107868 / KCTC 3260 / NRRL B-441) (Lactobacillus paracasei).